The primary structure comprises 445 residues: tRNA-2-methylthio-N(6)-dimethylallyladenosine synthase (445 aa).

In terms of domain architecture, MTTase N-terminal spans 3–120; it reads RKLFIQTHGC…LPGLITQAAS (118 aa). [4Fe-4S] cluster contacts are provided by C12, C49, C83, C157, C161, and C164. Positions 143–375 constitute a Radical SAM core domain; it reads SVDGPSAFVS…QQRINQNVQD (233 aa). Residues 378-442 enclose the TRAM domain; that stretch reads RKMVGSTQRI…SNSLLGTDPR (65 aa).

This sequence belongs to the methylthiotransferase family. MiaB subfamily. In terms of assembly, monomer. Requires [4Fe-4S] cluster as cofactor.

It is found in the cytoplasm. It carries out the reaction N(6)-dimethylallyladenosine(37) in tRNA + (sulfur carrier)-SH + AH2 + 2 S-adenosyl-L-methionine = 2-methylsulfanyl-N(6)-dimethylallyladenosine(37) in tRNA + (sulfur carrier)-H + 5'-deoxyadenosine + L-methionine + A + S-adenosyl-L-homocysteine + 2 H(+). In terms of biological role, catalyzes the methylthiolation of N6-(dimethylallyl)adenosine (i(6)A), leading to the formation of 2-methylthio-N6-(dimethylallyl)adenosine (ms(2)i(6)A) at position 37 in tRNAs that read codons beginning with uridine. The chain is tRNA-2-methylthio-N(6)-dimethylallyladenosine synthase from Alcanivorax borkumensis (strain ATCC 700651 / DSM 11573 / NCIMB 13689 / SK2).